A 234-amino-acid polypeptide reads, in one-letter code: CHD1 helical C-terminal domain containing protein 1 (234 aa).

The tract at residues 1–38 (MEASDGQADEREEPLEQGTNARSLERRSSTTPAKDSLV) is disordered. A CHD1 helical C-terminal domain (CHCT) region spans residues 44–145 (LDRDTFKICK…NNQTTKFLMA (102 aa)). Residues 200-234 (LRARGPRRRGSKLPQEPKLKRRRIKEAPDTPETCL) form a disordered region.

The protein localises to the cytoplasm. Its subcellular location is the nucleus. Its function is as follows. May play a role in regulation of apoptosis. This chain is CHD1 helical C-terminal domain containing protein 1 (CHCT1), found in Bos taurus (Bovine).